A 180-amino-acid chain; its full sequence is uncharacterized protein (180 aa).

One can recognise an N-acetyltransferase domain in the interval 45–180 (FVFSQVRTLD…GNRCAFWYAN (136 aa)).

Belongs to the acetyltransferase family. Ycf52 subfamily.

This is an uncharacterized protein from Prochlorococcus marinus (strain SARG / CCMP1375 / SS120).